A 97-amino-acid chain; its full sequence is YcgL domain-containing protein PA14_47450 (97 aa).

Positions 3–87 (RICSVYKSPR…GEEEYIEHLP (85 aa)) constitute a YcgL domain.

This chain is YcgL domain-containing protein PA14_47450, found in Pseudomonas aeruginosa (strain UCBPP-PA14).